Consider the following 323-residue polypeptide: MKLKMLLLSSTPPGSPGGQADTNTTPATPTTSTTAVDSTSRQLTTSKQPQQTETRGRRYGRRPSSKSRRSQTQQRRSRSRHRSRSRSRSRSKSQTHTTRSTTRSRSTSLTKTRALTSRSRSRGRSPTTCRRGGGRSPRRRSRSPSTSSSCTTQRSQRARAESSTTRGARGSRGSRGGSRGGRGRRRGRSSSSSSPAHKRSRGGSAKLRGVSPGEVGGSLRSVSSKHTGRLGRLLEEARDPPVIIVKGAANTLKCFRNRAKIKYMGLFRSFSTTWSWVAGDGTERLGRPRMLISFSSYTQRRDFDEAVRYPKGVDKAYGNLDSL.

The tract at residues 1 to 233 (MKLKMLLLSS…SKHTGRLGRL (233 aa)) is disordered. Residues 20–40 (ADTNTTPATPTTSTTAVDSTS) are compositionally biased toward low complexity. Residues 41–53 (RQLTTSKQPQQTE) are compositionally biased toward polar residues. The segment covering 57 to 93 (RRYGRRPSSKSRRSQTQQRRSRSRHRSRSRSRSRSKS) has biased composition (basic residues). Residues 94-130 (QTHTTRSTTRSRSTSLTKTRALTSRSRSRGRSPTTCR) are compositionally biased toward low complexity. Positions 132 to 142 (GGGRSPRRRSR) are enriched in basic residues. Residues 143-155 (SPSTSSSCTTQRS) are compositionally biased toward low complexity.

This sequence belongs to the papillomaviridae E8^E2C protein family.

It localises to the host nucleus. Its function is as follows. Plays a role in limiting the replication of viral DNA in keratinocytes. Recruits the host NCoR/SMRT complex to viral replication foci to mediate repression of both viral replication and transcription. The sequence is that of Protein E8^E2C from Homo sapiens (Human).